The following is a 142-amino-acid chain: METKLVLALIACGVICLLQTTPTEATGKHVQQLMKVFRAIDFDFTKKAFYLHRAKYGVQNQLRNPLYLKAMSLPRSAKLSQPCLKKMIDEVNDLESTFYAGFSFNCHDHDQYSMDCLEAAEPTYLDGLKKLAASTEQCLVQK.

The N-terminal stretch at 1–25 (METKLVLALIACGVICLLQTTPTEA) is a signal peptide. Disulfide bonds link Cys83–Cys138 and Cys106–Cys116.

As to quaternary structure, interacts with host coagulation factor XII (F12) (inactive and activated). Interacts with host high molecular weight kininogen (KNG1) (inactive and activated).

The protein resides in the secreted. Zn(2+) modulates binding to host coagulation factor XII (F12) and high molecular weight kininogen (KNG1). Its function is as follows. Salivary protein with anticoagulant activity. Inhibits activation of host kallikrein-kinin system by preventing the reciprocal activation of coagulation factor XII (F12) and prekallikrein (KLKB1), and subsequent release of bradykinin. Inhibits host factor XII and high molecular weight kininogen (KNG1) binding to negatively charged surfaces. Weakly inhibits the alternative pathway of complement system activation in the host. This Anopheles stephensi (Indo-Pakistan malaria mosquito) protein is gSG7 salivary protein.